The following is a 286-amino-acid chain: Glycine--tRNA ligase alpha subunit (286 aa).

Belongs to the class-II aminoacyl-tRNA synthetase family. As to quaternary structure, tetramer of two alpha and two beta subunits.

It is found in the cytoplasm. It catalyses the reaction tRNA(Gly) + glycine + ATP = glycyl-tRNA(Gly) + AMP + diphosphate. The protein is Glycine--tRNA ligase alpha subunit of Campylobacter lari (strain RM2100 / D67 / ATCC BAA-1060).